Reading from the N-terminus, the 65-residue chain is Small hydrophobic protein (65 aa).

Residues 1–20 lie on the Intravirion side of the membrane; sequence MGNTSITIEFTSKFWPYFTL. The tract at residues 6–15 is interaction with host BCAP31; it reads ITIEFTSKFW. Residues 21–44 traverse the membrane as a helical; Signal-anchor for type II membrane protein segment; that stretch reads IHMILTLISLLIIITIMIAILNKL. The segment at 38–43 is interaction with small-molecule inhibitor; sequence IAILNK. Residues 45–65 are Virion surface-facing; the sequence is SEHKTFCNNTLELGQMHQINT. Residue Asn-52 is glycosylated (N-linked (GlcNAc...) asparagine; by host).

This sequence belongs to the orthopneumovirus small hydrophobic protein family. Homopentamer forming a funnel-like pore. Interacts with glycoprotein G; this interaction occurs on the surface of virion particles and infected cells. Interacts with host BCAP31 (via C-terminus); this interaction is direct. Four species of SH have been detected in infected cell cytoplasm: a 7.5 kDa non-glycosylated form (SH0), a 13-15 kDa form that contains one or two N-linked carbohydrate side chains of the high-mannose type (SHg), a 21-30 kDa polylactosaminoglycan-modified form of the protein (SHp), and the isoform generated by alternative translational initiation. Of these different forms, SH0 is by far the most abundant protein detected during virus infection. In terms of processing, tyrosine phosphorylated.

Its subcellular location is the virion membrane. It localises to the host cell membrane. The protein localises to the host Golgi apparatus membrane. It is found in the host endoplasmic reticulum membrane. Channel activity is inhibited by copper. Also inhibited by small-molecule pyronin B. In terms of biological role, viroporin that forms a homopentameric ion channel displaying low ion selectivity. May play a role in virus morphogenesis and pathogenicity at various stages of the viral life cycle. Accumulates at the membrane of the Golgi apparatus in infected cells and may facilitate virus release by modifying the secretory pathway. May enhance host membrane permeability and disrupt cellular ion homeostasis, which can be sensed as damage-associated molecular patterns/danger signals, triggering NLRP3 inflammasome activation and inflammatory immune response. Also inhibits host TNFA-mediated signaling pathway and may delay apoptosis, allowing time for the virus to replicate. The sequence is that of Small hydrophobic protein from Homo sapiens (Human).